Consider the following 183-residue polypeptide: Inner membrane protein p54 (183 aa).

The helical transmembrane segment at 32–52 threads the bilayer; the sequence is YTILIAIVVLVIIIIVLIYLF. The tract at residues 81-157 is disordered; the sequence is EVTPQPGTSK…PYTTVTTQNT (77 aa). Over residues 111 to 122 the composition is skewed to polar residues; that stretch reads RPATNKPVTDNP. Over residues 130–143 the composition is skewed to low complexity; it reads ATGGPAAAPAAASA. The interaction with host DYNLL1 stretch occupies residues 149–161; the sequence is YTTVTTQNTASQT.

This sequence belongs to the asfivirus envelope protein p54 family. In terms of assembly, interacts with the host light chain cytoplasmic dynein DYNLL1; this interaction is critical for intracellular microtubule-dependent virus transport toward viral factories.

It is found in the virion membrane. Its subcellular location is the host cytoplasm. The protein localises to the host cytoskeleton. The protein resides in the host endoplasmic reticulum membrane. Inner envelope protein involved, through its interaction with host dynein, in the intracellular microtubule-dependent transport of viral capsid toward viral factories. Seems to induce caspase-3 activation and apoptosis. Plays a role in virion morphogenesis by recruiting and transforming the host ER membranes into the precursors of the viral envelope. Involved in virus attachment to the host cell. This chain is Inner membrane protein p54, found in African swine fever virus (strain Badajoz 1971 Vero-adapted) (Ba71V).